A 766-amino-acid chain; its full sequence is Single-minded homolog 1 (766 aa).

Residues 1–53 (MKEKSKNAARTRREKENSEFYELAKLLPLPSAITSQLDKASIIRLTTSYLKMR) form the bHLH domain. 2 PAS domains span residues 77 to 147 (GREL…QPYH) and 218 to 288 (PPSA…LVKG). One can recognise a PAC domain in the interval 292–335 (TKYYRFLAKHGGWVWVQSYATIVHNSRSSRPHCIVSVNYVLTDT). One can recognise a Single-minded C-terminal domain in the interval 336–766 (EYKGLQLSLD…GTSVIITNGS (431 aa)). The span at 353 to 365 (AFSYTSSSTPTMT) shows a compositional bias: polar residues. Disordered regions lie at residues 353–431 (AFSY…SQHD) and 528–563 (WDEDSVVSSPDPGSASESGDRYRTEQYQSSPHEPSK). The Nuclear localization signal motif lies at 368-387 (RKGAKSRLSSSKSKSRTSPY). A compositionally biased stretch (low complexity) spans 373–385 (SRLSSSKSKSRTS). Over residues 394-404 (HTERSESDHDS) the composition is skewed to basic and acidic residues.

As to quaternary structure, efficient DNA binding requires dimerization with another bHLH protein. Heterodimer; forms a heterodimer with ARNT, ARNT2.

It is found in the nucleus. Its function is as follows. Transcriptional factor that may have pleiotropic effects during embryogenesis and in the adult. In Pan paniscus (Pygmy chimpanzee), this protein is Single-minded homolog 1 (SIM1).